The primary structure comprises 79 residues: Cell division protein ZapB (79 aa).

Residues 3–79 adopt a coiled-coil conformation; that stretch reads LEVFEKLEAK…QALLGRMEEV (77 aa).

Belongs to the ZapB family. In terms of assembly, homodimer. The ends of the coiled-coil dimer bind to each other, forming polymers. Interacts with FtsZ.

The protein localises to the cytoplasm. Non-essential, abundant cell division factor that is required for proper Z-ring formation. It is recruited early to the divisome by direct interaction with FtsZ, stimulating Z-ring assembly and thereby promoting cell division earlier in the cell cycle. Its recruitment to the Z-ring requires functional FtsA or ZipA. The protein is Cell division protein ZapB of Salmonella typhi.